The sequence spans 624 residues: Vitamin B12 transporter BtuB (624 aa).

An N-terminal signal peptide occupies residues 1 to 21 (MTIKKYTLLTALSVTAFSGWA). A TonB box motif is present at residues 31-38 (NEMVVTAN). In terms of domain architecture, TBDR plug spans 43-157 (PKSSVLAPVD…IGGVVNIITE (115 aa)). Cyanocob(III)alamin contacts are provided by residues Leu-88, Ser-90, Asn-97, and 115 to 116 (IS). The 465-residue stretch at 160–624 (TLGSTLTAGL…EYYFTGSYNF (465 aa)) folds into the TBDR beta-barrel domain. The next 3 beta stranded transmembrane spans lie at 163 to 170 (STLTAGLG), 174 to 183 (YQNYNGSTQQ), and 189 to 200 (TTITLAGNYDYS). Ca(2+) is bound by residues Asp-204, Gln-216, Asp-218, and Asp-220. 2 consecutive transmembrane segments (beta stranded) span residues 222-232 (YLGKMLWLGAN) and 237-253 (EQFS…NRSD). Residues Tyr-254, Asp-255, and Asp-266 each contribute to the Ca(2+) site. The next 17 membrane-spanning stretches (beta stranded) occupy residues 268-282 (RSLS…INFS), 284-301 (GGYA…QDYN), 314-330 (TLDD…NTYQ), 333-342 (LGNVGGGLDW), 358-374 (YEQR…QFVG), 376-386 (VTLEGAIRGDD), 390-405 (FGWH…WEFV), 408-422 (YRLI…KAPN), 440-449 (ESTQWEAAIT), 455-464 (LDWRLSAYRN), 481-498 (YYNV…TGSF), 502-517 (PLSH…PRNA), 525-537 (RRAK…QLDW), 543-557 (DWSV…RYDS), 568-582 (PVKL…LAVS), 595-606 (IANLFDKDYEMV), and 612-624 (PGRE…SYNF). A cyanocob(III)alamin-binding site is contributed by Thr-314. Arg-525 contributes to the cyanocob(III)alamin binding site. The TonB C-terminal box signature appears at 607-624 (YGYQTPGREYYFTGSYNF).

Belongs to the TonB-dependent receptor family. BtuB (TC 1.B.14.3.1) subfamily.

It localises to the cell outer membrane. Involved in the active translocation of vitamin B12 (cyanocobalamin) across the outer membrane to the periplasmic space. It derives its energy for transport by interacting with the trans-periplasmic membrane protein TonB. The chain is Vitamin B12 transporter BtuB from Yersinia pseudotuberculosis serotype O:1b (strain IP 31758).